The chain runs to 81 residues: Weak neurotoxin OH-72 (81 aa).

A signal peptide spans 1 to 16 (LTLVVVTIVCLDLGYT). 5 disulfides stabilise this stretch: Cys-19-Cys-40, Cys-22-Cys-27, Cys-33-Cys-58, Cys-62-Cys-73, and Cys-74-Cys-79.

This sequence belongs to the three-finger toxin family. Ancestral subfamily. Orphan group II sub-subfamily. In terms of tissue distribution, expressed by the venom gland.

The protein localises to the secreted. Binds with low affinity to muscular (alpha-1-beta-1-delta-epsilon/CHRNA1-CHRNB1-CHRND-CHRNE) and very low affinity to neuronal (alpha-7/CHRNA7) nicotinic acetylcholine receptor (nAChR). The polypeptide is Weak neurotoxin OH-72 (Ophiophagus hannah (King cobra)).